The following is a 56-amino-acid chain: Protein hunchback (56 aa).

3 C2H2-type zinc fingers span residues 1–5 (HLRNH), 11–33 (FRCDKCDYQCVNKSMLNSHLKSH), and 39–56 (YRCADCTYATKYCHSLKL).

This sequence belongs to the hunchback C2H2-type zinc-finger protein family.

It is found in the nucleus. Its function is as follows. Gap class segmentation protein that controls development of head structures. The protein is Protein hunchback (hb) of Locusta migratoria (Migratory locust).